Here is a 39-residue protein sequence, read N- to C-terminus: Contryphan-Cal4 (39 aa).

A signal peptide spans M1–S20. A disulfide bridge links C29 with C35.

In terms of tissue distribution, expressed by the venom duct.

Its subcellular location is the secreted. In terms of biological role, probable neurotoxin. The sequence is that of Contryphan-Cal4 from Californiconus californicus (California cone).